The primary structure comprises 488 residues: Multidrug resistance outer membrane protein MdtP (488 aa).

An N-terminal signal peptide occupies residues 1–23 (MINRQLSRLLLCSILGSTTLISG). Cys-24 carries the N-palmitoyl cysteine lipid modification. The S-diacylglycerol cysteine moiety is linked to residue Cys-24.

This sequence belongs to the outer membrane factor (OMF) (TC 1.B.17) family. As to quaternary structure, could be part of a tripartite efflux system composed of MdtN, MdtO and MdtP.

The protein localises to the cell outer membrane. Functionally, could be involved in resistance to puromycin, acriflavine and tetraphenylarsonium chloride. The sequence is that of Multidrug resistance outer membrane protein MdtP (mdtP) from Escherichia coli O6:H1 (strain CFT073 / ATCC 700928 / UPEC).